We begin with the raw amino-acid sequence, 278 residues long: MATPTSVRIAGFRSLQALCAQRTVTRNFSLLNRPAPNYPGHIPLTPVERGVLAIGSAVGSLLNPRRGDLIATLGETTATPFFIYRLRDAMLSNPTGRRILRDRPRITSQTLSLPYLRSLPPNTVGYTYAAWLDREGVSPDTRSSVQYIDDEECAYVMQRYRECHDFYHAVTGLPIMVEGEIALKAFEFLNTLIPMTGLSVFAAVRLKPEERQRFWSIHLPWAVRSGLASKELINVYWEEQLERDVNELREELNIEKPPDLRDIRKKLREQKRAARRQQ.

A mitochondrion-targeting transit peptide spans 1 to 28 (MATPTSVRIAGFRSLQALCAQRTVTRNF). Positions 164, 165, 168, and 180 each coordinate Zn(2+).

It belongs to the COQ4 family. Component of a multi-subunit COQ enzyme complex, composed of at least COQ3, COQ4, COQ5, COQ6, COQ7 and COQ9. Zn(2+) is required as a cofactor.

The protein resides in the mitochondrion inner membrane. The catalysed reaction is a 4-hydroxy-3-methoxy-5-(all-trans-polyprenyl)benzoate + H(+) = a 2-methoxy-6-(all-trans-polyprenyl)phenol + CO2. It functions in the pathway cofactor biosynthesis; ubiquinone biosynthesis. Its function is as follows. Lyase that catalyzes the C1-decarboxylation of 4-hydroxy-3-methoxy-5-(all-trans-polyprenyl)benzoic acid into 2-methoxy-6-(all-trans-polyprenyl)phenol during ubiquinone biosynthesis. The sequence is that of Ubiquinone biosynthesis protein COQ4, mitochondrial from Uncinocarpus reesii (strain UAMH 1704).